We begin with the raw amino-acid sequence, 546 residues long: Chaperonin GroEL (546 aa).

Residues 30 to 33 (TLGP), K51, 87 to 91 (DGTTT), G415, and D495 each bind ATP.

It belongs to the chaperonin (HSP60) family. As to quaternary structure, forms a cylinder of 14 subunits composed of two heptameric rings stacked back-to-back. Interacts with the co-chaperonin GroES.

Its subcellular location is the cytoplasm. It catalyses the reaction ATP + H2O + a folded polypeptide = ADP + phosphate + an unfolded polypeptide.. In terms of biological role, together with its co-chaperonin GroES, plays an essential role in assisting protein folding. The GroEL-GroES system forms a nano-cage that allows encapsulation of the non-native substrate proteins and provides a physical environment optimized to promote and accelerate protein folding. The sequence is that of Chaperonin GroEL from Brucella anthropi (strain ATCC 49188 / DSM 6882 / CCUG 24695 / JCM 21032 / LMG 3331 / NBRC 15819 / NCTC 12168 / Alc 37) (Ochrobactrum anthropi).